The sequence spans 425 residues: Serine--tRNA ligase (425 aa).

231-233 (TAE) contacts L-serine. 262-264 (RSE) serves as a coordination point for ATP. Glutamate 285 lines the L-serine pocket. Residue 349–352 (EISS) participates in ATP binding. An L-serine-binding site is contributed by serine 385.

It belongs to the class-II aminoacyl-tRNA synthetase family. Type-1 seryl-tRNA synthetase subfamily. As to quaternary structure, homodimer. The tRNA molecule binds across the dimer.

It is found in the cytoplasm. The enzyme catalyses tRNA(Ser) + L-serine + ATP = L-seryl-tRNA(Ser) + AMP + diphosphate + H(+). It carries out the reaction tRNA(Sec) + L-serine + ATP = L-seryl-tRNA(Sec) + AMP + diphosphate + H(+). Its pathway is aminoacyl-tRNA biosynthesis; selenocysteinyl-tRNA(Sec) biosynthesis; L-seryl-tRNA(Sec) from L-serine and tRNA(Sec): step 1/1. Its function is as follows. Catalyzes the attachment of serine to tRNA(Ser). Is also able to aminoacylate tRNA(Sec) with serine, to form the misacylated tRNA L-seryl-tRNA(Sec), which will be further converted into selenocysteinyl-tRNA(Sec). The chain is Serine--tRNA ligase from Bacillus subtilis (strain 168).